A 176-amino-acid polypeptide reads, in one-letter code: NAD(P)H-quinone oxidoreductase subunit 6, chloroplastic (176 aa).

5 helical membrane passes run phenylalanine 10 to threonine 30, proline 32 to proline 52, alanine 61 to methionine 81, tryptophan 93 to isoleucine 115, and phenylalanine 152 to alanine 172.

It belongs to the complex I subunit 6 family. As to quaternary structure, NDH is composed of at least 16 different subunits, 5 of which are encoded in the nucleus.

The protein localises to the plastid. It localises to the chloroplast thylakoid membrane. It catalyses the reaction a plastoquinone + NADH + (n+1) H(+)(in) = a plastoquinol + NAD(+) + n H(+)(out). It carries out the reaction a plastoquinone + NADPH + (n+1) H(+)(in) = a plastoquinol + NADP(+) + n H(+)(out). Functionally, NDH shuttles electrons from NAD(P)H:plastoquinone, via FMN and iron-sulfur (Fe-S) centers, to quinones in the photosynthetic chain and possibly in a chloroplast respiratory chain. The immediate electron acceptor for the enzyme in this species is believed to be plastoquinone. Couples the redox reaction to proton translocation, and thus conserves the redox energy in a proton gradient. This is NAD(P)H-quinone oxidoreductase subunit 6, chloroplastic (ndhG) from Vitis vinifera (Grape).